The sequence spans 239 residues: Orotidine 5'-phosphate decarboxylase (239 aa).

Substrate-binding positions include aspartate 11, lysine 33, 60-69 (DLKLHDIPTT), threonine 123, arginine 185, glutamine 194, glycine 214, and arginine 215. The Proton donor role is filled by lysine 62.

The protein belongs to the OMP decarboxylase family. Type 1 subfamily. In terms of assembly, homodimer.

It catalyses the reaction orotidine 5'-phosphate + H(+) = UMP + CO2. It functions in the pathway pyrimidine metabolism; UMP biosynthesis via de novo pathway; UMP from orotate: step 2/2. Its function is as follows. Catalyzes the decarboxylation of orotidine 5'-monophosphate (OMP) to uridine 5'-monophosphate (UMP). The protein is Orotidine 5'-phosphate decarboxylase (pyrF) of Bacillus subtilis (strain 168).